The sequence spans 87 residues: Retinal rod rhodopsin-sensitive cGMP 3',5'-cyclic phosphodiesterase subunit gamma (87 aa).

The residue at position 1 (Met1) is an N-acetylmethionine. The span at 1 to 12 (MNLEPPKAEIRS) shows a compositional bias: basic and acidic residues. The disordered stretch occupies residues 1 to 55 (MNLEPPKAEIRSATRVIGGPVTPRKGPPKFKQRQTRQFKSKPPKKGVQGFGDDIP). A compositionally biased stretch (basic residues) spans 26-44 (GPPKFKQRQTRQFKSKPPK).

The protein belongs to the rod/cone cGMP-PDE gamma subunit family. As to quaternary structure, oligomer composed of two catalytic chains (alpha and beta), an inhibitory chain (gamma) and the delta chain.

The catalysed reaction is 3',5'-cyclic GMP + H2O = GMP + H(+). Functionally, participates in processes of transmission and amplification of the visual signal. cGMP-PDEs are the effector molecules in G-protein-mediated phototransduction in vertebrate rods and cones. The polypeptide is Retinal rod rhodopsin-sensitive cGMP 3',5'-cyclic phosphodiesterase subunit gamma (PDE6G) (Canis lupus familiaris (Dog)).